Consider the following 470-residue polypeptide: Uronate isomerase (470 aa).

It belongs to the metallo-dependent hydrolases superfamily. Uronate isomerase family.

The catalysed reaction is D-glucuronate = D-fructuronate. It carries out the reaction aldehydo-D-galacturonate = keto-D-tagaturonate. Its pathway is carbohydrate metabolism; pentose and glucuronate interconversion. The polypeptide is Uronate isomerase (Sphingopyxis alaskensis (strain DSM 13593 / LMG 18877 / RB2256) (Sphingomonas alaskensis)).